Here is a 588-residue protein sequence, read N- to C-terminus: Aspartate--tRNA ligase (588 aa).

E172 is an L-aspartate binding site. An aspartate region spans residues 196–199; the sequence is QLFK. An L-aspartate-binding site is contributed by R218. ATP is bound by residues 218–220 and Q227; that span reads RDE. H449 lines the L-aspartate pocket. E483 provides a ligand contact to ATP. R490 serves as a coordination point for L-aspartate. Position 535 to 538 (535 to 538) interacts with ATP; the sequence is GLDR.

Belongs to the class-II aminoacyl-tRNA synthetase family. Type 1 subfamily. In terms of assembly, homodimer.

The protein resides in the cytoplasm. The enzyme catalyses tRNA(Asp) + L-aspartate + ATP = L-aspartyl-tRNA(Asp) + AMP + diphosphate. Functionally, catalyzes the attachment of L-aspartate to tRNA(Asp) in a two-step reaction: L-aspartate is first activated by ATP to form Asp-AMP and then transferred to the acceptor end of tRNA(Asp). The sequence is that of Aspartate--tRNA ligase from Haemophilus influenzae (strain PittGG).